Here is a 355-residue protein sequence, read N- to C-terminus: Uroporphyrinogen decarboxylase (355 aa).

Substrate is bound by residues 27–31 (RQAGR), D78, Y155, T210, and H328.

This sequence belongs to the uroporphyrinogen decarboxylase family. In terms of assembly, homodimer.

It localises to the cytoplasm. The enzyme catalyses uroporphyrinogen III + 4 H(+) = coproporphyrinogen III + 4 CO2. The protein operates within porphyrin-containing compound metabolism; protoporphyrin-IX biosynthesis; coproporphyrinogen-III from 5-aminolevulinate: step 4/4. Its function is as follows. Catalyzes the decarboxylation of four acetate groups of uroporphyrinogen-III to yield coproporphyrinogen-III. The protein is Uroporphyrinogen decarboxylase of Pseudomonas fluorescens (strain Pf0-1).